A 1152-amino-acid chain; its full sequence is Nucleolar protein 6 (1152 aa).

Disordered regions lie at residues 1–30 (MPSAGERPAVKMGPAPAGEQHRRATEDPEV) and 36–55 (EGMDKEKAPSRKRARTEPPA). Phosphoserine is present on S65. The stretch at 92–128 (LLRLQVEELLKEVRLSEKKKERIDNFLKEVTKRIQKV) forms a coiled coil. Phosphoserine is present on residues S292 and S817.

Belongs to the NRAP family. In terms of assembly, part of the small subunit (SSU) processome, composed of more than 70 proteins and the RNA chaperone small nucleolar RNA (snoRNA) U3. Interacts with RRP7A; required for NOL6 localization to nucleolus. In terms of tissue distribution, ubiquitously expressed.

The protein resides in the nucleus. It is found in the nucleolus. The protein localises to the chromosome. Functionally, part of the small subunit (SSU) processome, first precursor of the small eukaryotic ribosomal subunit. During the assembly of the SSU processome in the nucleolus, many ribosome biogenesis factors, an RNA chaperone and ribosomal proteins associate with the nascent pre-rRNA and work in concert to generate RNA folding, modifications, rearrangements and cleavage as well as targeted degradation of pre-ribosomal RNA by the RNA exosome. The protein is Nucleolar protein 6 (Nol6) of Mus musculus (Mouse).